Reading from the N-terminus, the 436-residue chain is Mitochondrial substrate carrier family protein Y (436 aa).

Positions 1-102 (MENNNKNINT…NINNNNINKK (102 aa)) are disordered. At 1–137 (MENNNKNINT…GGFLAGLSRN (137 aa)) the chain is on the mitochondrial intermembrane side. Solcar repeat units lie at residues 135–226 (SRNV…TLKY) and 236–334 (HDTL…LKKQ). The chain crosses the membrane as a helical span at residues 138–158 (VTRIIGSFSSGMAEESAGYPL). At 159–194 (DLIKTRIQLSQSGVSGGGGTNTSIIKIFKDVIKTEG) the chain is on the mitochondrial matrix side. The helical transmembrane segment at 195 to 215 (VIGLFKGLSSPLILSALVTAI) threads the bilayer. Residues 216-238 (QFGLFEDTLKYFRKHQYFKNHDT) are Mitochondrial intermembrane-facing. Residues 239–259 (LSLLFSGSIAGFAQSFITCPV) form a helical membrane-spanning segment. The Mitochondrial matrix segment spans residues 260–313 (DLVKIQMQIQGIPSSQPNSNNNNNNNKAKGNSYFTKLIYREKGLLGFYQGLSPT). The chain crosses the membrane as a helical span at residues 314–334 (LFRDVPGLAIFFTTYETLKKQ). The Mitochondrial intermembrane portion of the chain corresponds to 335–347 (FGQPELSTQSPTE). Residues 348–368 (FIKSFIPIVLSGGSAGVFYHG) traverse the membrane as a helical segment. The stretch at 350 to 436 (KSFIPIVLSG…FLVYEMVINL (87 aa)) is one Solcar 3 repeat. Topologically, residues 369–413 (LTHPFDIAKTLIQSDRSATKYKGTFDCLKQVYQNQGPKSLFKGFS) are mitochondrial matrix. A helical transmembrane segment spans residues 414-434 (AVAIKSFQSNAVGFLVYEMVI). The Mitochondrial intermembrane portion of the chain corresponds to 435–436 (NL).

This sequence belongs to the mitochondrial carrier (TC 2.A.29) family.

It localises to the mitochondrion inner membrane. Its function is as follows. Mitochondrial solute carriers shuttle metabolites, nucleotides, and cofactors through the mitochondrial inner membrane. This is Mitochondrial substrate carrier family protein Y (mcfY) from Dictyostelium discoideum (Social amoeba).